The chain runs to 436 residues: Na(+)/H(+) antiporter NhaA (436 aa).

11 consecutive transmembrane segments (helical) span residues Ala-14–Trp-34, Leu-59–Leu-79, Ala-95–Phe-115, Trp-125–Trp-145, Ile-152–Ile-172, Pro-176–Phe-196, Phe-214–Phe-234, Ala-300–Ile-320, Ile-336–Leu-356, Leu-374–Leu-394, and Leu-407–Val-427.

The protein belongs to the NhaA Na(+)/H(+) (TC 2.A.33) antiporter family.

Its subcellular location is the cell inner membrane. The enzyme catalyses Na(+)(in) + 2 H(+)(out) = Na(+)(out) + 2 H(+)(in). In terms of biological role, na(+)/H(+) antiporter that extrudes sodium in exchange for external protons. In Acidithiobacillus ferrooxidans (strain ATCC 23270 / DSM 14882 / CIP 104768 / NCIMB 8455) (Ferrobacillus ferrooxidans (strain ATCC 23270)), this protein is Na(+)/H(+) antiporter NhaA.